A 330-amino-acid chain; its full sequence is B-cell receptor CD22 (330 aa).

Residues 1–17 (MHLLGPWLLLLEYLAFS) form the signal peptide. Residues 18–136 (DSSKWAFEHP…MERIHLNVSE (119 aa)) enclose the Ig-like V-type domain. The Extracellular portion of the chain corresponds to 18–330 (DSSKWAFEHP…VFLQVQYAPE (313 aa)). Intrachain disulfides connect cysteine 37–cysteine 165, cysteine 42–cysteine 100, and cysteine 159–cysteine 217. N-linked (GlcNAc...) asparagine glycans are attached at residues asparagine 65, asparagine 99, and asparagine 110. Position 118 (arginine 118) interacts with N-acetylneuraminate. N-linked (GlcNAc...) asparagine glycosylation is found at asparagine 133, asparagine 162, asparagine 187, and asparagine 229. Ig-like C2-type domains follow at residues 141 to 233 (PHIQ…DTVQ) and 240 to 324 (PKLK…VFLQ). Cysteine 263 and cysteine 307 are oxidised to a cystine.

It belongs to the immunoglobulin superfamily. SIGLEC (sialic acid binding Ig-like lectin) family. As to quaternary structure, predominantly monomer of isoform CD22-beta. Also found as heterodimer of isoform CD22-beta and a shorter isoform. Interacts with PTPN6/SHP-1, LYN, SYK, PIK3R1/PIK3R2 and PLCG1 upon phosphorylation. Interacts with GRB2, INPP5D and SHC1 upon phosphorylation. May form a complex with INPP5D/SHIP, GRB2 and SHC1.

Its subcellular location is the cell membrane. Its function is as follows. Most highly expressed siglec (sialic acid-binding immunoglobulin-like lectin) on B-cells that plays a role in various aspects of B-cell biology including differentiation, antigen presentation, and trafficking to bone marrow. Binds to alpha 2,6-linked sialic acid residues of surface molecules such as CD22 itself, CD45 and IgM in a cis configuration. Can also bind to ligands on other cells as an adhesion molecule in a trans configuration. Acts as an inhibitory coreceptor on the surface of B-cells and inhibits B-cell receptor induced signaling, characterized by inhibition of the calcium mobilization and cellular activation. Mechanistically, the immunoreceptor tyrosine-based inhibitory motif domain is phosphorylated by the Src kinase LYN, which in turn leads to the recruitment of the protein tyrosine phosphatase 1/PTPN6, leading to the negative regulation of BCR signaling. If this negative signaling from is of sufficient strength, apoptosis of the B-cell can be induced. In Pongo pygmaeus (Bornean orangutan), this protein is B-cell receptor CD22.